A 432-amino-acid polypeptide reads, in one-letter code: Acyl-CoA dehydrogenase AFT10-1 (432 aa).

It belongs to the acyl-CoA dehydrogenase family. Requires FAD as cofactor.

It participates in mycotoxin biosynthesis. Its function is as follows. Acyl-CoA dehydrogenase; part of the gene clusters that mediate the biosynthesis of the host-selective toxins (HSTs) AF-toxins responsible for Alternaria black spot of strawberry disease by the strawberry pathotype. AF-toxin I and III are valine derivatives of 2,3-dyhydroxy-isovaleric acid and 2-hydroxy-isovaleric acid respectively, while AF II is an isoleucine derivative of 2-hydroxy-valeric acid. These derivatives are bound to a 9,10-epoxy-8-hydroxy-9-methyl-decatrienoic acid (EDA) moiety. On cellular level, AF-toxins affect plasma membrane of susceptible cells and cause a sudden increase in loss of K(+) after a few minutes of toxin treatment. The aldo-keto reductase AFTS1 catalyzes the conversion of 2-keto-isovaleric acid (2-KIV) to 2-hydroxy-isovaleric acid (2-HIV) by reduction of its ketone to an alcohol. The acyl-CoA ligase AFT1, the hydrolase AFT2 and the enoyl-CoA hydratases AFT3 and AFT6, but also the polyketide synthase AFT9, the acyl-CoA dehydrogenase AFT10, the cytochrome P450 monooxygenase AFT11 and the oxidoreductase AFT12 are all involved in the biosynthesis of the AK-, AF- and ACT-toxin common EDA structural moiety. The exact function of each enzyme, and of additional enzymes identified within the AF-toxin clusters have still to be determined. This chain is Acyl-CoA dehydrogenase AFT10-1, found in Alternaria alternata (Alternaria rot fungus).